Consider the following 81-residue polypeptide: ATP synthase subunit c (81 aa).

The next 2 helical transmembrane spans lie at 6 to 26 (AAASVIAAALAVGLAAIGPGF) and 57 to 77 (LAFMESLTIYGLVIALVLLFA).

The protein belongs to the ATPase C chain family. As to quaternary structure, F-type ATPases have 2 components, F(1) - the catalytic core - and F(0) - the membrane proton channel. F(1) has five subunits: alpha(3), beta(3), gamma(1), delta(1), epsilon(1). F(0) has four main subunits: a(1), b(1), b'(1) and c(10-14). The alpha and beta chains form an alternating ring which encloses part of the gamma chain. F(1) is attached to F(0) by a central stalk formed by the gamma and epsilon chains, while a peripheral stalk is formed by the delta, b and b' chains.

The protein resides in the cellular thylakoid membrane. In terms of biological role, f(1)F(0) ATP synthase produces ATP from ADP in the presence of a proton or sodium gradient. F-type ATPases consist of two structural domains, F(1) containing the extramembraneous catalytic core and F(0) containing the membrane proton channel, linked together by a central stalk and a peripheral stalk. During catalysis, ATP synthesis in the catalytic domain of F(1) is coupled via a rotary mechanism of the central stalk subunits to proton translocation. Its function is as follows. Key component of the F(0) channel; it plays a direct role in translocation across the membrane. A homomeric c-ring of between 10-14 subunits forms the central stalk rotor element with the F(1) delta and epsilon subunits. This is ATP synthase subunit c from Rippkaea orientalis (strain PCC 8801 / RF-1) (Cyanothece sp. (strain PCC 8801)).